Here is a 595-residue protein sequence, read N- to C-terminus: DNA mismatch repair protein MutL (595 aa).

This sequence belongs to the DNA mismatch repair MutL/HexB family.

Its function is as follows. This protein is involved in the repair of mismatches in DNA. It is required for dam-dependent methyl-directed DNA mismatch repair. May act as a 'molecular matchmaker', a protein that promotes the formation of a stable complex between two or more DNA-binding proteins in an ATP-dependent manner without itself being part of a final effector complex. This Endomicrobium trichonymphae protein is DNA mismatch repair protein MutL.